The primary structure comprises 231 residues: Ribose-5-phosphate isomerase A (231 aa).

Substrate-binding positions include 31–34 (SGST), 87–90 (DGAD), and 100–103 (KGGG). The active-site Proton acceptor is Glu-109. Lys-127 provides a ligand contact to substrate.

It belongs to the ribose 5-phosphate isomerase family. Homodimer.

It catalyses the reaction aldehydo-D-ribose 5-phosphate = D-ribulose 5-phosphate. It functions in the pathway carbohydrate degradation; pentose phosphate pathway; D-ribose 5-phosphate from D-ribulose 5-phosphate (non-oxidative stage): step 1/1. Its function is as follows. Catalyzes the reversible conversion of ribose-5-phosphate to ribulose 5-phosphate. In Chlamydia pneumoniae (Chlamydophila pneumoniae), this protein is Ribose-5-phosphate isomerase A.